The primary structure comprises 193 residues: Ion-translocating oxidoreductase complex subunit A (193 aa).

Helical transmembrane passes span 5–25 (LLLFVGTVLVNNFVLVKFLGL), 39–59 (IGMGLATTFVLTLASVCAWMV), 62–82 (FILLPLGLVYLRTLAFILVIA), 102–122 (LLGIFLPLITTNCAVLGVALL), 134–154 (AVYGFSAAAGFSLVMVLFAAI), and 171–191 (SIALITAGLMSLAFMGFTGLV).

It belongs to the NqrDE/RnfAE family. In terms of assembly, the complex is composed of six subunits: RnfA, RnfB, RnfC, RnfD, RnfE and RnfG.

It localises to the cell inner membrane. Functionally, part of a membrane-bound complex that couples electron transfer with translocation of ions across the membrane. This chain is Ion-translocating oxidoreductase complex subunit A, found in Yersinia enterocolitica serotype O:8 / biotype 1B (strain NCTC 13174 / 8081).